The chain runs to 590 residues: Potassium-transporting ATPase potassium-binding subunit (590 aa).

The next 4 membrane-spanning stretches (helical) occupy residues A3–G23, H63–Q83, G134–I154, and L177–I197. The tract at residues P217–T244 is disordered. The next 8 membrane-spanning stretches (helical) occupy residues F284–M304, W312–A332, F359–V379, A388–V408, G411–G431, S450–A470, V515–M535, and L558–A578.

This sequence belongs to the KdpA family. As to quaternary structure, the system is composed of three essential subunits: KdpA, KdpB and KdpC.

It localises to the cell inner membrane. Functionally, part of the high-affinity ATP-driven potassium transport (or Kdp) system, which catalyzes the hydrolysis of ATP coupled with the electrogenic transport of potassium into the cytoplasm. This subunit binds the periplasmic potassium ions and delivers the ions to the membrane domain of KdpB through an intramembrane tunnel. The chain is Potassium-transporting ATPase potassium-binding subunit from Ralstonia nicotianae (strain ATCC BAA-1114 / GMI1000) (Ralstonia solanacearum).